A 311-amino-acid polypeptide reads, in one-letter code: Homeobox protein Hox-B1a (311 aa).

Residues 217-276 (QNTIRTNFTTKQLTELEKEFHFSKYLTRARRVEIAATLELNETQVKIWFQNRRMKQKKRE) constitute a DNA-binding region (homeobox). The segment at 267-311 (NRRMKQKKREKEGLAPASSTSSKDLEDQSDHSTSTSPEASPSPDS) is disordered. Low complexity predominate over residues 298 to 311 (STSTSPEASPSPDS).

Belongs to the Antp homeobox family. Labial subfamily.

The protein resides in the nucleus. Sequence-specific transcription factor which is part of a developmental regulatory system that provides cells with specific positional identities on the anterior-posterior axis. The polypeptide is Homeobox protein Hox-B1a (hoxb1a) (Danio rerio (Zebrafish)).